The sequence spans 574 residues: DNA polymerase I (574 aa).

A 3'-5' exonuclease domain is found at 4–161 (EYVTGEEGLK…ELFPKMRDML (158 aa)).

Belongs to the DNA polymerase type-A family.

It carries out the reaction DNA(n) + a 2'-deoxyribonucleoside 5'-triphosphate = DNA(n+1) + diphosphate. In Aquifex aeolicus (strain VF5), this protein is DNA polymerase I (polA).